Consider the following 574-residue polypeptide: E3 ubiquitin-protein ligase NEURL1 (574 aa).

Polar residues predominate over residues 1–18 (MGNNFSSVSSLQRGNPSR). A disordered region spans residues 1–53 (MGNNFSSVSSLQRGNPSRASRGHPQNLKDSIGGSFPVPSHRCHHKQKHCPPTL). Residue G2 is the site of N-myristoyl glycine attachment. 2 consecutive NHR domains span residues 61 to 217 (TPLL…QLLD) and 292 to 447 (GDLR…RILG). Residues 520 to 560 (ECTICYEHAVDTVIYTCGHMCLCYSCGLRLKKALHACCPIC) form an RING-type zinc finger.

In terms of assembly, interacts with CPEB3 (via N-terminal domain); the interaction increases CPEB3 ubiquitination. Interacts with DLL1. Post-translationally, myristoylation is a determinant of membrane targeting. In terms of tissue distribution, expressed in CA1 pyramidal neurons (at protein level). Expressed throughout the adult forebrain, including the cerebral cortex, amygdala, striatum, and CA1 area of the hippocampus. Expressed in sensory neurons of the olfactory epithelium, the vomeronasal organ, mammary gland and skeletal muscle.

It localises to the cytoplasm. Its subcellular location is the perinuclear region. It is found in the cell membrane. The protein resides in the perikaryon. The protein localises to the cell projection. It localises to the dendrite. Its subcellular location is the postsynaptic density. It carries out the reaction S-ubiquitinyl-[E2 ubiquitin-conjugating enzyme]-L-cysteine + [acceptor protein]-L-lysine = [E2 ubiquitin-conjugating enzyme]-L-cysteine + N(6)-ubiquitinyl-[acceptor protein]-L-lysine.. It functions in the pathway protein modification; protein ubiquitination. Plays a role in hippocampal-dependent synaptic plasticity, learning and memory. Involved in the formation of spines and functional synaptic contacts by modulating the translational activity of the cytoplasmic polyadenylation element-binding protein CPEB3. Promotes ubiquitination of CPEB3, and hence induces CPEB3-dependent mRNA translation activation of glutamate receptor GRIA1 and GRIA2. Can function as an E3 ubiquitin-protein ligase to activate monoubiquitination of JAG1 (in vitro), thereby regulating the Notch pathway. Acts as a tumor suppressor; inhibits malignant cell transformation of medulloblastoma (MB) cells by inhibiting the Notch signaling pathway. In Mus musculus (Mouse), this protein is E3 ubiquitin-protein ligase NEURL1 (Neurl1).